A 250-amino-acid polypeptide reads, in one-letter code: tRNA (guanine-N(1)-)-methyltransferase (250 aa).

Residues Gly115 and 135–140 (LGDFVL) each bind S-adenosyl-L-methionine.

It belongs to the RNA methyltransferase TrmD family. In terms of assembly, homodimer.

The protein localises to the cytoplasm. It catalyses the reaction guanosine(37) in tRNA + S-adenosyl-L-methionine = N(1)-methylguanosine(37) in tRNA + S-adenosyl-L-homocysteine + H(+). Specifically methylates guanosine-37 in various tRNAs. This chain is tRNA (guanine-N(1)-)-methyltransferase, found in Legionella pneumophila subsp. pneumophila (strain Philadelphia 1 / ATCC 33152 / DSM 7513).